The sequence spans 157 residues: Small ribosomal subunit protein uS7 (157 aa).

It belongs to the universal ribosomal protein uS7 family. Part of the 30S ribosomal subunit. Contacts proteins S9 and S11.

In terms of biological role, one of the primary rRNA binding proteins, it binds directly to 16S rRNA where it nucleates assembly of the head domain of the 30S subunit. Is located at the subunit interface close to the decoding center, probably blocks exit of the E-site tRNA. This is Small ribosomal subunit protein uS7 from Roseiflexus castenholzii (strain DSM 13941 / HLO8).